The sequence spans 149 residues: Probable flagellum biosynthesis repressor protein FlbT (149 aa).

This sequence belongs to the FlbT family.

In terms of biological role, has a post-transcriptional repressor function in flagellum biogenesis. Associates with the 5'-UTR of fljK mRNA and promotes its degradation. The sequence is that of Probable flagellum biosynthesis repressor protein FlbT from Allorhizobium ampelinum (strain ATCC BAA-846 / DSM 112012 / S4) (Agrobacterium vitis (strain S4)).